The sequence spans 126 residues: Holo-[acyl-carrier-protein] synthase (126 aa).

Residues D9 and E58 each coordinate Mg(2+).

It belongs to the P-Pant transferase superfamily. AcpS family. It depends on Mg(2+) as a cofactor.

The protein localises to the cytoplasm. The catalysed reaction is apo-[ACP] + CoA = holo-[ACP] + adenosine 3',5'-bisphosphate + H(+). Functionally, transfers the 4'-phosphopantetheine moiety from coenzyme A to a Ser of acyl-carrier-protein. The polypeptide is Holo-[acyl-carrier-protein] synthase (Vibrio campbellii (strain ATCC BAA-1116)).